A 36-amino-acid polypeptide reads, in one-letter code: Potassium channel toxin alpha-KTx 16.5 (36 aa).

3 disulfide bridges follow: cysteine 7–cysteine 28, cysteine 13–cysteine 33, and cysteine 17–cysteine 35. Residues 26–33 are interaction with Ca(2+)-activated K(+) channels; that stretch reads GKCQNKQC.

This sequence belongs to the short scorpion toxin superfamily. Potassium channel inhibitor family. Alpha-KTx 16 subfamily. In terms of tissue distribution, expressed by the venom gland.

It is found in the secreted. Its function is as follows. Augments responses to direct muscle stimulation probably by blocking calcium-activated potassium channels. The sequence is that of Potassium channel toxin alpha-KTx 16.5 from Leiurus hebraeus (Hebrew deathstalker scorpion).